Consider the following 739-residue polypeptide: Potassium transporter 26 (739 aa).

The Cytoplasmic portion of the chain corresponds to 1–81; that stretch reads MEYHHRPHSP…RQVALLSFQS (81 aa). The helical transmembrane segment at 82 to 102 threads the bilayer; that stretch reads LGVVYGDLGTSPLYVFSSISL. The Extracellular portion of the chain corresponds to 103-112; it reads DDPGEADFVG. A helical membrane pass occupies residues 113–133; sequence ILSIILWTFTMICLVKYVFIV. The Cytoplasmic portion of the chain corresponds to 134-198; sequence LKADDHGEGG…KFLEQSTKWQ (65 aa). Residues 199-219 form a helical membrane-spanning segment; it reads AVITYIVLAGTCMVLGDGALT. At 220–236 the chain is on the extracellular side; that stretch reads PAISVLSAVQGIQSRSS. A helical transmembrane segment spans residues 237-257; sequence SITQAHVVLLSVIILFILFFF. The Cytoplasmic portion of the chain corresponds to 258-268; the sequence is QKHGTSKVSFT. Residues 269 to 289 form a helical membrane-spanning segment; the sequence is FSPIMILWFTFVAFIGLYNII. Residues 290–318 are Extracellular-facing; it reads KHYPPILKAVSPHYIIIYFIRNKRAAWET. Residues 319–339 form a helical membrane-spanning segment; the sequence is LGAIVLCITGAEAMFADLGHF. Residues 340–347 lie on the Cytoplasmic side of the membrane; it reads NKSSIQMA. A helical transmembrane segment spans residues 348-368; the sequence is FSVIVYPSMILAYAGQAAFLV. Topologically, residues 369 to 385 are extracellular; it reads KNPSKLSTTFYSSTPEP. A helical transmembrane segment spans residues 386-406; it reads LFWPMFIIATLAAIVASQALI. Over 407 to 437 the chain is Cytoplasmic; the sequence is SASFSIIRQSIALGCFPRVTMKHTSGKHEGQ. The chain crosses the membrane as a helical span at residues 438–458; the sequence is VYSPEINYFLMVACILITVGF. Over 459-469 the chain is Extracellular; that stretch reads KGGPEIGQAFG. Residues 470 to 490 form a helical membrane-spanning segment; the sequence is VAVIFVMLFTTNLMTVVMLII. The Cytoplasmic segment spans residues 491–494; the sequence is WESN. A helical transmembrane segment spans residues 495 to 515; the sequence is IALASLFFVFFFSIEGIYMTS. Residues 516-519 lie on the Extracellular side of the membrane; sequence LMNK. The helical transmembrane segment at 520-540 threads the bilayer; sequence ILQGGWVPFAITAFFLIITLS. Residues 541–739 are Cytoplasmic-facing; that stretch reads WTYGRSKKGE…TLQVGMLYEI (199 aa).

It belongs to the HAK/KUP transporter (TC 2.A.72.3) family.

It is found in the membrane. Functionally, high-affinity potassium transporter. The sequence is that of Potassium transporter 26 (HAK26) from Oryza sativa subsp. japonica (Rice).